The sequence spans 1616 residues: Replicase large subunit (1616 aa).

The interval 50-458 is methyltransferase; the sequence is FSKVVSEEQT…QSLSMTFFLH (409 aa). An Alphavirus-like MT domain is found at 72–281; that stretch reads TFYNTQNAVH…HSYSNILKYV (210 aa). Positions 801 to 963 constitute a (+)RNA virus helicase ATP-binding domain; it reads VVYSDMAKLR…KLEVDEVETR (163 aa). The tract at residues 830–1085 is helicase; sequence LVDGVPGCGK…RHTKSLKYYT (256 aa). ATP-binding positions include 836–841, Arg-868, 967–968, Arg-1076, and 1097–1100; these read GCGKTK, LR, and DLER. The (+)RNA virus helicase C-terminal domain occupies 964–1116; the sequence is RTTLRCPADV…DMYKVDAGTQ (153 aa). Positions 1380–1493 constitute a RdRp catalytic domain; sequence MDVLELDVSK…YFPKGCEYPD (114 aa).

This sequence belongs to the ssRNA positive-strand viruses RNA-directed RNA polymerase family. In terms of assembly, heterodimer of a large and a small subunit. May interact with the host proteins TOM1 and ARL8. Interacts via an ATP bridge, with host protein Tm-1 (e.g. tomato Tm-1 AC A7M6E7).

It carries out the reaction RNA(n) + a ribonucleoside 5'-triphosphate = RNA(n+1) + diphosphate. The catalysed reaction is ATP + H2O = ADP + phosphate + H(+). In resistant plants, is bound by host protein Tm-1 (e.g. tomato Tm-1 AC A7M6E7), thereby inhibiting replication complex activity. Functionally, is an RNA-dependent RNA polymerase active in viral RNA replication. Its function is as follows. Is a methyltransferase active in RNA capping and an RNA helicase. Methyltransferase displays a cytoplasmic capping enzyme activity. This function is necessary since all viral RNAs are synthesized in the cytoplasm, and host capping enzymes are restricted to the nucleus. Helicase region probably exhibits NTPase and RNA unwinding activities (Potential). It also acts as a suppressor of RNA-mediated gene silencing, also known as post-transcriptional gene silencing (PTGS), a mechanism of plant viral defense that limits the accumulation of viral RNAs. May mediate silencing suppression through either inhibition of HEN1-mediated siRNA or siRNA demethylation. This Tomato mosaic virus (strain L) (ToMV) protein is Replicase large subunit.